The following is a 617-amino-acid chain: KIF-binding protein (617 aa).

Residues 48-83 (ALLGPAPEDDDERAADDGPVDQALGAGEPRDAEGPG) are disordered. S174 carries the post-translational modification Phosphoserine.

The protein belongs to the KIF-binding protein family. As to quaternary structure, interacts with KIF1B; positively regulates KIF1B microtubule motor activity. Interacts with STMN2.

Its subcellular location is the cytoplasm. The protein resides in the cytoskeleton. In terms of biological role, activator of KIF1B plus-end-directed microtubule motor activity. Required for organization of axonal microtubules, and axonal outgrowth and maintenance during peripheral and central nervous system development. The sequence is that of KIF-binding protein (Kifbp) from Rattus norvegicus (Rat).